The sequence spans 79 residues: Three-finger toxin A2 (79 aa).

Residues 1-21 (MKTLLLTLVVVTIVCLDLGNS) form the signal peptide. 4 cysteine pairs are disulfide-bonded: Cys-24–Cys-41, Cys-34–Cys-59, Cys-63–Cys-71, and Cys-72–Cys-77.

Belongs to the three-finger toxin family. Short-chain subfamily. As to expression, expressed by the venom gland.

The protein localises to the secreted. This is Three-finger toxin A2 from Micrurus laticollaris (Balsas coral snake).